A 237-amino-acid chain; its full sequence is Phosphoribosylaminoimidazole-succinocarboxamide synthase (237 aa).

It belongs to the SAICAR synthetase family.

The enzyme catalyses 5-amino-1-(5-phospho-D-ribosyl)imidazole-4-carboxylate + L-aspartate + ATP = (2S)-2-[5-amino-1-(5-phospho-beta-D-ribosyl)imidazole-4-carboxamido]succinate + ADP + phosphate + 2 H(+). It participates in purine metabolism; IMP biosynthesis via de novo pathway; 5-amino-1-(5-phospho-D-ribosyl)imidazole-4-carboxamide from 5-amino-1-(5-phospho-D-ribosyl)imidazole-4-carboxylate: step 1/2. In Yersinia enterocolitica serotype O:8 / biotype 1B (strain NCTC 13174 / 8081), this protein is Phosphoribosylaminoimidazole-succinocarboxamide synthase.